We begin with the raw amino-acid sequence, 516 residues long: Adenine DNA glycosylase (516 aa).

Basic residues predominate over residues 1–23 (MKKLRASVRSHKKQPANHKRRGK). The tract at residues 1–38 (MKKLRASVRSHKKQPANHKRRGKCALSSSQAKPSGLDG) is disordered. Residue Glu105 is the Proton donor/acceptor of the active site. [4Fe-4S] cluster-binding residues include Cys261, Cys268, Cys271, and Cys277. The Nudix hydrolase domain occupies 335–467 (PREEYSATCV…AMKKVFRVYE (133 aa)). The Nudix box signature appears at 376 to 398 (VTLEPSGQHQHKALLQELQHWSA). The segment at 474–516 (CKGSKRPQVCTPSSRKKPSRGQQVLDRFFQRHIPTHKPNSTTQ) is disordered.

Belongs to the Nth/MutY family. [4Fe-4S] cluster is required as a cofactor. Expressed in brain, spleen, heart, liver and kidney.

The protein localises to the nucleus. The protein resides in the mitochondrion. It carries out the reaction Hydrolyzes free adenine bases from 7,8-dihydro-8-oxoguanine:adenine mismatched double-stranded DNA, leaving an apurinic site.. Involved in oxidative DNA damage repair. Initiates repair of A*oxoG to C*G by removing the inappropriately paired adenine base from the DNA backbone. Possesses both adenine and 2-OH-A DNA glycosylase activities. This is Adenine DNA glycosylase (Mutyh) from Rattus norvegicus (Rat).